Consider the following 182-residue polypeptide: Large ribosomal subunit protein uL6 (182 aa).

Belongs to the universal ribosomal protein uL6 family. In terms of assembly, part of the 50S ribosomal subunit.

In terms of biological role, this protein binds to the 23S rRNA, and is important in its secondary structure. It is located near the subunit interface in the base of the L7/L12 stalk, and near the tRNA binding site of the peptidyltransferase center. In Methanococcus maripaludis (strain C7 / ATCC BAA-1331), this protein is Large ribosomal subunit protein uL6.